The following is a 90-amino-acid chain: Secretoglobin family 1D member 2 (90 aa).

Residues 1-21 (MKLSVCLLLVTLALCCYQANA) form the signal peptide.

This sequence belongs to the secretoglobin family. Lipophilin subfamily. In terms of tissue distribution, highest expression was found in skeletal muscle. Expressed as well in thymus, trachea, kidney, steroid responsive tissues (prostate, testis, uterus, breast and ovary) and salivary gland.

The protein resides in the secreted. Its function is as follows. May bind androgens and other steroids, may also bind estramustine, a chemotherapeutic agent used for prostate cancer. May be under transcriptional regulation of steroid hormones. The polypeptide is Secretoglobin family 1D member 2 (SCGB1D2) (Homo sapiens (Human)).